The sequence spans 133 residues: Large ribosomal subunit protein eL14 (133 aa).

Belongs to the eukaryotic ribosomal protein eL14 family.

This is Large ribosomal subunit protein eL14 from Pisum sativum (Garden pea).